Reading from the N-terminus, the 526-residue chain is ATP synthase subunit alpha (526 aa).

ATP is bound at residue 171 to 178 (GDRQTGKT).

The protein belongs to the ATPase alpha/beta chains family. F-type ATPases have 2 components, CF(1) - the catalytic core - and CF(0) - the membrane proton channel. CF(1) has five subunits: alpha(3), beta(3), gamma(1), delta(1), epsilon(1). CF(0) has four main subunits: a(1), b(1), b'(1) and c(9-12).

It localises to the cell inner membrane. It carries out the reaction ATP + H2O + 4 H(+)(in) = ADP + phosphate + 5 H(+)(out). Functionally, produces ATP from ADP in the presence of a proton gradient across the membrane. The alpha chain is a regulatory subunit. This is ATP synthase subunit alpha from Chlorobium chlorochromatii (strain CaD3).